Here is a 142-residue protein sequence, read N- to C-terminus: MGAPTLPPAWQPFLKDHRISTFKNWPFLEGCACTPERMAEAGFIHCPTENEPDLAQCFFCFKELEGWEPDDDPIEEHKKHSSGCAFLSVKKQFEELTLGEFLKLDRERAKNKIAKETNNKKKEFEETAKKVRRAIEQLAAMD.

Residues 18 to 88 (RISTFKNWPF…KHSSGCAFLS (71 aa)) form a BIR repeat. Ser20 bears the Phosphoserine; by AURKC mark. Position 23 is an N6-acetyllysine (Lys23). Thr34 is subject to Phosphothreonine; by CDK1 and CDK15. Phosphothreonine is present on Thr48. Residues Cys57, Cys60, His77, and Cys84 each contribute to the Zn(2+) site. 4 positions are modified to N6-acetyllysine: Lys90, Lys110, Lys112, and Lys115. Phosphothreonine; by AURKB is present on Thr117. Lys129 carries the N6-acetyllysine modification.

This sequence belongs to the IAP family. In terms of assembly, monomer or homodimer. Exists as a homodimer in the apo state and as a monomer in the CPC-bound state. The monomer protects cells against apoptosis more efficiently than the dimer. Only the dimeric form is capable of enhancing tubulin stability in cells. When phosphorylated, interacts with LAMTOR5/HBXIP; the resulting complex binds pro-CASP9, as well as active CASP9, but much less efficiently. Component of the chromosomal passenger complex (CPC) composed of at least BIRC5/survivin, CDCA8/borealin, INCENP, AURKB or AURKC; in the complex forms a triple-helix bundle-based subcomplex with INCENP and CDCA8. Interacts with JTB. Interacts (via BIR domain) with histone H3 phosphorylated at 'Thr-3' (H3pT3). Interacts with EVI5. Interacts with GTP-bound RAN in both the S and M phases of the cell cycle. Interacts with USP9X. Interacts with tubulin. Interacts with BIRC2/c-IAP1. The acetylated form at Lys-129 interacts with STAT3. The monomeric form deacetylated at Lys-129 interacts with XPO1/CRM1. The monomeric form interacts with XIAP/BIRC4. Both the dimeric and monomeric form can interact with DIABLO/SMAC. Interacts with BIRC6/bruce. Interacts with FBXL7; this interaction facilitates the polyubiquitination and subsequent proteasomal degradation of BIRC5 by the SCF(FBXL7) E3 ubiquitin-protein ligase complex. Post-translationally, ubiquitinated by the Cul9-RING ubiquitin-protein ligase complex, leading to its degradation. Ubiquitination is required for centrosomal targeting. Deubiquitinated by USP35 or USP38; leading to stabilization. Acetylation at Lys-129 results in its homodimerization, while deacetylation promotes the formation of monomers which heterodimerize with XPO1/CRM1 which facilitates its nuclear export. The acetylated form represses STAT3 transactivation. The dynamic equilibrium between its acetylation and deacetylation at Lys-129 determines its interaction with XPO1/CRM1, its subsequent subcellular localization, and its ability to inhibit STAT3 transactivation. In terms of processing, in vitro phosphorylation at Thr-117 by AURKB prevents interaction with INCENP and localization to mitotic chromosomes. Phosphorylation at Thr-48 by CK2 is critical for its mitotic and anti-apoptotic activities. Phosphorylation at Thr-34 by CDK15 is critical for its anti-apoptotic activity. Phosphorylation at Ser-20 by AURKC is critical for regulation of proper chromosome alignment and segregation, and possibly cytokinesis.

It is found in the cytoplasm. The protein localises to the nucleus. It localises to the chromosome. Its subcellular location is the centromere. The protein resides in the cytoskeleton. It is found in the spindle. The protein localises to the kinetochore. It localises to the midbody. Multitasking protein that has dual roles in promoting cell proliferation and preventing apoptosis. Component of a chromosome passage protein complex (CPC) which is essential for chromosome alignment and segregation during mitosis and cytokinesis. Acts as an important regulator of the localization of this complex; directs CPC movement to different locations from the inner centromere during prometaphase to midbody during cytokinesis and participates in the organization of the center spindle by associating with polymerized microtubules. Involved in the recruitment of CPC to centromeres during early mitosis via association with histone H3 phosphorylated at 'Thr-3' (H3pT3) during mitosis. The complex with RAN plays a role in mitotic spindle formation by serving as a physical scaffold to help deliver the RAN effector molecule TPX2 to microtubules. May counteract a default induction of apoptosis in G2/M phase. The acetylated form represses STAT3 transactivation of target gene promoters. May play a role in neoplasia. Inhibitor of CASP3 and CASP7. Essential for the maintenance of mitochondrial integrity and function. In Pongo abelii (Sumatran orangutan), this protein is Baculoviral IAP repeat-containing protein 5 (BIRC5).